A 416-amino-acid polypeptide reads, in one-letter code: Chorismate synthase (416 aa).

Positions 40 and 46 each coordinate NADP(+). Residues Arg135 to Ser137, Gln256 to Ala257, Gly300, Lys315 to Thr319, and Arg341 contribute to the FMN site.

The protein belongs to the chorismate synthase family. Homotetramer. It depends on FMNH2 as a cofactor.

It carries out the reaction 5-O-(1-carboxyvinyl)-3-phosphoshikimate = chorismate + phosphate. It functions in the pathway metabolic intermediate biosynthesis; chorismate biosynthesis; chorismate from D-erythrose 4-phosphate and phosphoenolpyruvate: step 7/7. In terms of biological role, catalyzes the anti-1,4-elimination of the C-3 phosphate and the C-6 proR hydrogen from 5-enolpyruvylshikimate-3-phosphate (EPSP) to yield chorismate, which is the branch point compound that serves as the starting substrate for the three terminal pathways of aromatic amino acid biosynthesis. This reaction introduces a second double bond into the aromatic ring system. The protein is Chorismate synthase of Kocuria rhizophila (strain ATCC 9341 / DSM 348 / NBRC 103217 / DC2201).